The following is a 444-amino-acid chain: Nuclear envelope integral membrane protein 1 (444 aa).

Residues 1–43 form the signal peptide; it reads MAGGMKVAVSPAVGPGPWGSGVGGGGTVRLLLILSGCLVYGTA. An N-linked (GlcNAc...) asparagine glycan is attached at Asn125. A run of 5 helical transmembrane segments spans residues 161-181, 186-206, 216-236, 245-265, and 289-309; these read PKLF…DLLS, FYYS…IIFI, PIYV…QLVF, CYWQ…FAVC, and LCFM…IIIA. Residues 186–297 form an a; required for its colocalization with lamins at the nuclear envelope region; sequence FYYSTGMTVG…GLCFMYSGIQ (112 aa). The interval 336-405 is b; required for interaction with RAN-GTP; that stretch reads PVPPRLLTEE…LTPNEVSVHE (70 aa). The segment at 336–444 is required for nuclear localization; it reads PVPPRLLTEE…PAITQNNFLT (109 aa). Phosphoserine is present on residues Ser368, Ser424, and Ser425.

The protein belongs to the NEMP family. In terms of assembly, homooligomer. Interacts with RAN-GTP. Interacts with EMD. Post-translationally, phosphorylation may regulate its interaction with RAN-GTP.

The protein resides in the nucleus inner membrane. Its subcellular location is the nucleus envelope. Functionally, together with EMD, contributes to nuclear envelope stiffness in germ cells. Required for female fertility. Essential for normal erythropoiesis. Required for efficient nuclear envelope opening and enucleation during the late stages of erythroblast maturation. This is Nuclear envelope integral membrane protein 1 (NEMP1) from Homo sapiens (Human).